The chain runs to 347 residues: MDTVIELSKLLFKGNASCTSTPTLKTARIMESAVTGITLTTSIPMIIIVVTTMILYHRVAKHNATSFYVITLFASDFVLMWCVFFMTVNRKQLFSFNRFFCQLVYFIYHAVCSYSISMLAIIATIRYKTLHRRKKTESKTSSTGRNIGILLLASSMCAIPTALFVKTNGMKKTGKCVVYISSKKAYELFLAVKIVFSFIWGVLPTMVFSFFYVIFCKALHDVTEKKYKKTLFFIRILLLSFLLIQIPYIAILICEIAFLYMPQNTCFWLARVEILQLIIRLMPQVHCFSNPLVYAFTGGELRNRFTACFQSFFPKTLCSTQKRKDSDASEHDQNSKSKASVEKNQPL.

6 helical membrane passes run 36 to 56 (GITL…MILY), 67 to 87 (FYVI…FFMT), 103 to 124 (LVYF…IIAT), 147 to 167 (IGIL…FVKT), 194 to 214 (IVFS…FYVI), and 236 to 256 (ILLL…ICEI). A disulfide bond links Cys101 and Cys176. Residues 321–347 (QKRKDSDASEHDQNSKSKASVEKNQPL) are disordered. Positions 322 to 341 (KRKDSDASEHDQNSKSKASV) are enriched in basic and acidic residues.

This sequence belongs to the G-protein coupled receptor 1 family.

The protein localises to the membrane. Its function is as follows. Probable G-protein coupled receptor. In Homo sapiens (Human), this protein is G-protein coupled receptor homolog U12 (U12).